The chain runs to 215 residues: Ras-like GTP-binding protein RHO1 (215 aa).

GTP contacts are provided by alanine 30, valine 31, glycine 32, lysine 33, threonine 34, and cysteine 35. Threonine 34 serves as a coordination point for Mg(2+). Short sequence motifs (switch) lie at residues 43 to 54 (GEIPTAYVPTVF) and 74 to 93 (DTAGQEEYDRLRPLSYADSD). Position 52 (threonine 52) interacts with Mg(2+). 2 residues coordinate GTP: aspartate 135 and serine 166. Positions 194–215 (VTTQAKSQESTQQKKKSKCLLQ) are disordered. A compositionally biased stretch (low complexity) spans 195-204 (TTQAKSQEST). A compositionally biased stretch (basic residues) spans 206–215 (QKKKSKCLLQ). Cysteine 212 is subject to Cysteine methyl ester. Cysteine 212 is lipidated: S-geranylgeranyl cysteine. Positions 213–215 (LLQ) are cleaved as a propeptide — removed in mature form.

Belongs to the small GTPase superfamily. Rho family. Interacts (GTP-bound form) with formin1 (via GBD/FH3 domain); the interaction activates formin1. Interacts (GTP-bound form) with profilin1. Interacts (GDP-bound form and when prenylated) with RhoGDI. It depends on Mg(2+) as a cofactor.

The protein localises to the cell membrane. It localises to the cytoplasm. Its subcellular location is the cytoskeleton. The protein resides in the cell projection. It is found in the phagocytic cup. The protein localises to the cytoplasmic vesicle. It localises to the phagosome. The catalysed reaction is GTP + H2O = GDP + phosphate + H(+). With respect to regulation, regulated by guanine nucleotide exchange factors (GEFs) which promote the exchange of bound GDP for free GTP, GTPase activating proteins (GAPs) which increase the GTP hydrolysis activity and GDP dissociation inhibitors which inhibit the dissociation of the nucleotide from the GTPase. Small GTPase which cycles between active GTP-bound and inactive GDP-bound states. Involved in actin cytoskeleton remodeling. Regulates phagocytosis by modulating actin cytoskeleton dynamics through the recruitment of formin1 and profilin1 to the phagocytosis nucleation site. The protein is Ras-like GTP-binding protein RHO1 of Entamoeba histolytica (strain ATCC 30459 / HM-1:IMSS / ABRM).